The primary structure comprises 336 residues: Fimbrial adhesin PapGII (336 aa).

The first 20 residues, 1 to 20, serve as a signal peptide directing secretion; the sequence is MKKWFPALLFSLCVSGESSA. Disulfide bonds link C64–C138 and C217–C249. Residues E79 and 124–127 contribute to the D-galactose site; that span reads GYKW.

Belongs to the adhesin PapG family.

Its subcellular location is the secreted. The protein resides in the fimbrium. Functionally, tip adhesin component of type P pili that plays a critical role in kidney infection through targeted interaction with the globoseries glycolipids containing the Gal-alpha(1-4)-Gal disaccharide present on uroepithelial cells. In turn, transcriptionally regulates host gene expression in kidney cells, leading to inflammatory pathway activation and renal tissue damage. Acts thereby as key determinant of invasive uropathogenic E.coli (UPEC), which cause pyelonephritis and urinary-source bacteremia. In Escherichia coli, this protein is Fimbrial adhesin PapGII.